The chain runs to 480 residues: UDP-glucose 6-dehydrogenase 2 (480 aa).

NAD(+)-binding positions include 8–13 (GAGYVG), Asp33, Arg38, 86–90 (VNTPT), 127–128 (ST), and Glu161. Substrate-binding positions include 157–161 (EFLAE), 216–223 (KLAANAFL), and 256–269 (RIGPKFLNSSVGFG). Cys272 functions as the Nucleophile in the catalytic mechanism. An NAD(+)-binding site is contributed by 272 to 275 (CFQK). 334 to 335 (FK) contacts substrate. Arg342 contacts NAD(+). Arg447 serves as a coordination point for substrate.

The protein belongs to the UDP-glucose/GDP-mannose dehydrogenase family. As to expression, preferentially expressed in roots.

It carries out the reaction UDP-alpha-D-glucose + 2 NAD(+) + H2O = UDP-alpha-D-glucuronate + 2 NADH + 3 H(+). The protein operates within nucleotide-sugar biosynthesis; UDP-alpha-D-glucuronate biosynthesis; UDP-alpha-D-glucuronate from UDP-alpha-D-glucose: step 1/1. Its activity is regulated as follows. Inhibited by UDP-xylose. In terms of biological role, involved in the biosynthesis of UDP-glucuronic acid (UDP-GlcA), providing nucleotide sugars for cell-wall polymers. Required for the formation of cell wall ingrowths on the outer cell walls of nematode-induced syncytia. This Arabidopsis thaliana (Mouse-ear cress) protein is UDP-glucose 6-dehydrogenase 2 (UGD2).